Consider the following 301-residue polypeptide: D-alanine--D-alanine ligase (301 aa).

Residues 99–294 (KCILKAANIR…FPELIDMIID (196 aa)) enclose the ATP-grasp domain. 126 to 181 (IEKMGYPVVVKPTHGGSSVATFIIKEEKDIKDAVIEGFKWDSEVIIEKFIKGDEIT) serves as a coordination point for ATP. Residues Asp248, Glu261, and Asn263 each coordinate Mg(2+).

The protein belongs to the D-alanine--D-alanine ligase family. Mg(2+) serves as cofactor. The cofactor is Mn(2+).

Its subcellular location is the cytoplasm. The enzyme catalyses 2 D-alanine + ATP = D-alanyl-D-alanine + ADP + phosphate + H(+). It participates in cell wall biogenesis; peptidoglycan biosynthesis. Its function is as follows. Cell wall formation. The chain is D-alanine--D-alanine ligase from Clostridium botulinum (strain Alaska E43 / Type E3).